Here is a 222-residue protein sequence, read N- to C-terminus: Cyclin-dependent kinase inhibitor 3 (222 aa).

The interval Lys68–Val101 is disordered. Positions Gly85–Val95 are enriched in basic and acidic residues.

Belongs to the CDI family. ICK/KRP subfamily. In terms of assembly, specifically interacts with CDKA-1, but not with CDKB1-1.

Its subcellular location is the nucleus. It localises to the nucleoplasm. Its function is as follows. Binds and inhibits CYCD2-1/CDKA-1 complex kinase activity. May target specifically CDKA-1. This is Cyclin-dependent kinase inhibitor 3 (KRP3) from Arabidopsis thaliana (Mouse-ear cress).